A 431-amino-acid polypeptide reads, in one-letter code: Serine hydroxymethyltransferase (431 aa).

Residues Leu128 and 132–134 (GHL) each bind (6S)-5,6,7,8-tetrahydrofolate. An N6-(pyridoxal phosphate)lysine modification is found at Lys237.

This sequence belongs to the SHMT family. Homodimer. It depends on pyridoxal 5'-phosphate as a cofactor.

The protein resides in the cytoplasm. The enzyme catalyses (6R)-5,10-methylene-5,6,7,8-tetrahydrofolate + glycine + H2O = (6S)-5,6,7,8-tetrahydrofolate + L-serine. Its pathway is one-carbon metabolism; tetrahydrofolate interconversion. It participates in amino-acid biosynthesis; glycine biosynthesis; glycine from L-serine: step 1/1. In terms of biological role, catalyzes the reversible interconversion of serine and glycine with tetrahydrofolate (THF) serving as the one-carbon carrier. This reaction serves as the major source of one-carbon groups required for the biosynthesis of purines, thymidylate, methionine, and other important biomolecules. Also exhibits THF-independent aldolase activity toward beta-hydroxyamino acids, producing glycine and aldehydes, via a retro-aldol mechanism. In Ruegeria pomeroyi (strain ATCC 700808 / DSM 15171 / DSS-3) (Silicibacter pomeroyi), this protein is Serine hydroxymethyltransferase.